A 194-amino-acid polypeptide reads, in one-letter code: Holliday junction branch migration complex subunit RuvA (194 aa).

A domain I region spans residues 1–64 (MIGRLRGVLT…DDSAALYGFL (64 aa)). The tract at residues 65–140 (SESERRLFRH…RAADFNNGIS (76 aa)) is domain II. The segment at 140–144 (STSGK) is flexible linker. The segment at 145-194 (LNLDTVSEAALALQQLGYKPAEAARMARDAGTESDDVASVIKKALQAALR) is domain III.

This sequence belongs to the RuvA family. In terms of assembly, homotetramer. Forms an RuvA(8)-RuvB(12)-Holliday junction (HJ) complex. HJ DNA is sandwiched between 2 RuvA tetramers; dsDNA enters through RuvA and exits via RuvB. An RuvB hexamer assembles on each DNA strand where it exits the tetramer. Each RuvB hexamer is contacted by two RuvA subunits (via domain III) on 2 adjacent RuvB subunits; this complex drives branch migration. In the full resolvosome a probable DNA-RuvA(4)-RuvB(12)-RuvC(2) complex forms which resolves the HJ.

The protein localises to the cytoplasm. Its function is as follows. The RuvA-RuvB-RuvC complex processes Holliday junction (HJ) DNA during genetic recombination and DNA repair, while the RuvA-RuvB complex plays an important role in the rescue of blocked DNA replication forks via replication fork reversal (RFR). RuvA specifically binds to HJ cruciform DNA, conferring on it an open structure. The RuvB hexamer acts as an ATP-dependent pump, pulling dsDNA into and through the RuvAB complex. HJ branch migration allows RuvC to scan DNA until it finds its consensus sequence, where it cleaves and resolves the cruciform DNA. This Xylella fastidiosa (strain 9a5c) protein is Holliday junction branch migration complex subunit RuvA.